We begin with the raw amino-acid sequence, 500 residues long: Lysine--tRNA ligase (500 aa).

Mg(2+)-binding residues include Glu-410 and Glu-417.

Belongs to the class-II aminoacyl-tRNA synthetase family. As to quaternary structure, homodimer. Mg(2+) is required as a cofactor.

The protein resides in the cytoplasm. It carries out the reaction tRNA(Lys) + L-lysine + ATP = L-lysyl-tRNA(Lys) + AMP + diphosphate. The protein is Lysine--tRNA ligase of Shewanella baltica (strain OS155 / ATCC BAA-1091).